Here is a 90-residue protein sequence, read N- to C-terminus: Probable Fe(2+)-trafficking protein (90 aa).

Belongs to the Fe(2+)-trafficking protein family.

Functionally, could be a mediator in iron transactions between iron acquisition and iron-requiring processes, such as synthesis and/or repair of Fe-S clusters in biosynthetic enzymes. The sequence is that of Probable Fe(2+)-trafficking protein from Paracidovorax citrulli (strain AAC00-1) (Acidovorax citrulli).